We begin with the raw amino-acid sequence, 367 residues long: Glutamate 5-kinase (367 aa).

Lysine 10 lines the ATP pocket. Residues serine 50, aspartate 137, and asparagine 149 each coordinate substrate. ATP-binding positions include 169 to 170 (TD) and 211 to 217 (TGGMSTK). The region spanning 275 to 353 (AGEITVDEGA…QEIDAILGYE (79 aa)) is the PUA domain.

The protein belongs to the glutamate 5-kinase family.

The protein resides in the cytoplasm. It carries out the reaction L-glutamate + ATP = L-glutamyl 5-phosphate + ADP. The protein operates within amino-acid biosynthesis; L-proline biosynthesis; L-glutamate 5-semialdehyde from L-glutamate: step 1/2. Its function is as follows. Catalyzes the transfer of a phosphate group to glutamate to form L-glutamate 5-phosphate. The polypeptide is Glutamate 5-kinase (Shigella flexneri).